The sequence spans 227 residues: ATP-dependent dethiobiotin synthetase BioD (227 aa).

13–18 (DIGKTY) serves as a coordination point for ATP. Thr17 is a binding site for Mg(2+). Lys38 is a catalytic residue. Ser42 lines the substrate pocket. ATP contacts are provided by residues Asp55, 116–119 (EGSG), and 179–180 (NN). 2 residues coordinate Mg(2+): Asp55 and Glu116.

This sequence belongs to the dethiobiotin synthetase family. Homodimer. The cofactor is Mg(2+).

Its subcellular location is the cytoplasm. The catalysed reaction is (7R,8S)-7,8-diammoniononanoate + CO2 + ATP = (4R,5S)-dethiobiotin + ADP + phosphate + 3 H(+). It participates in cofactor biosynthesis; biotin biosynthesis; biotin from 7,8-diaminononanoate: step 1/2. In terms of biological role, catalyzes a mechanistically unusual reaction, the ATP-dependent insertion of CO2 between the N7 and N8 nitrogen atoms of 7,8-diaminopelargonic acid (DAPA, also called 7,8-diammoniononanoate) to form a ureido ring. In Clostridium botulinum (strain ATCC 19397 / Type A), this protein is ATP-dependent dethiobiotin synthetase BioD.